A 507-amino-acid polypeptide reads, in one-letter code: Maturase K (507 aa).

The protein belongs to the intron maturase 2 family. MatK subfamily.

The protein resides in the plastid. It localises to the chloroplast. In terms of biological role, usually encoded in the trnK tRNA gene intron. Probably assists in splicing its own and other chloroplast group II introns. In Lyonia lucida (Fetterbush), this protein is Maturase K.